Consider the following 147-residue polypeptide: Small ribosomal subunit protein uS12 (147 aa).

This sequence belongs to the universal ribosomal protein uS12 family. In terms of assembly, part of the 30S ribosomal subunit.

Functionally, with S4 and S5 plays an important role in translational accuracy. Located at the interface of the 30S and 50S subunits. The chain is Small ribosomal subunit protein uS12 from Staphylothermus marinus (strain ATCC 43588 / DSM 3639 / JCM 9404 / F1).